The following is a 179-amino-acid chain: Large ribosomal subunit protein uL5 (179 aa).

Belongs to the universal ribosomal protein uL5 family. In terms of assembly, part of the 50S ribosomal subunit; part of the 5S rRNA/L5/L18/L25 subcomplex. Contacts the 5S rRNA and the P site tRNA. Forms a bridge to the 30S subunit in the 70S ribosome.

Its function is as follows. This is one of the proteins that bind and probably mediate the attachment of the 5S RNA into the large ribosomal subunit, where it forms part of the central protuberance. In the 70S ribosome it contacts protein S13 of the 30S subunit (bridge B1b), connecting the 2 subunits; this bridge is implicated in subunit movement. Contacts the P site tRNA; the 5S rRNA and some of its associated proteins might help stabilize positioning of ribosome-bound tRNAs. This Citrobacter koseri (strain ATCC BAA-895 / CDC 4225-83 / SGSC4696) protein is Large ribosomal subunit protein uL5.